A 267-amino-acid polypeptide reads, in one-letter code: Phosphatidylserine decarboxylase proenzyme (267 aa).

Residues D78, H132, and S236 each act as charge relay system; for autoendoproteolytic cleavage activity in the active site. Catalysis depends on S236, which acts as the Schiff-base intermediate with substrate; via pyruvic acid; for decarboxylase activity. S236 is modified (pyruvic acid (Ser); by autocatalysis).

The protein belongs to the phosphatidylserine decarboxylase family. PSD-B subfamily. Prokaryotic type I sub-subfamily. As to quaternary structure, heterodimer of a large membrane-associated beta subunit and a small pyruvoyl-containing alpha subunit. Requires pyruvate as cofactor. Is synthesized initially as an inactive proenzyme. Formation of the active enzyme involves a self-maturation process in which the active site pyruvoyl group is generated from an internal serine residue via an autocatalytic post-translational modification. Two non-identical subunits are generated from the proenzyme in this reaction, and the pyruvate is formed at the N-terminus of the alpha chain, which is derived from the carboxyl end of the proenzyme. The autoendoproteolytic cleavage occurs by a canonical serine protease mechanism, in which the side chain hydroxyl group of the serine supplies its oxygen atom to form the C-terminus of the beta chain, while the remainder of the serine residue undergoes an oxidative deamination to produce ammonia and the pyruvoyl prosthetic group on the alpha chain. During this reaction, the Ser that is part of the protease active site of the proenzyme becomes the pyruvoyl prosthetic group, which constitutes an essential element of the active site of the mature decarboxylase.

Its subcellular location is the cell membrane. The enzyme catalyses a 1,2-diacyl-sn-glycero-3-phospho-L-serine + H(+) = a 1,2-diacyl-sn-glycero-3-phosphoethanolamine + CO2. The protein operates within phospholipid metabolism; phosphatidylethanolamine biosynthesis; phosphatidylethanolamine from CDP-diacylglycerol: step 2/2. In terms of biological role, catalyzes the formation of phosphatidylethanolamine (PtdEtn) from phosphatidylserine (PtdSer). The sequence is that of Phosphatidylserine decarboxylase proenzyme from Helicobacter pylori (strain Shi470).